Consider the following 357-residue polypeptide: Probable butyrate kinase 1 (357 aa).

It belongs to the acetokinase family.

The protein resides in the cytoplasm. The catalysed reaction is butanoate + ATP = butanoyl phosphate + ADP. In Caldanaerobacter subterraneus subsp. tengcongensis (strain DSM 15242 / JCM 11007 / NBRC 100824 / MB4) (Thermoanaerobacter tengcongensis), this protein is Probable butyrate kinase 1.